The following is a 72-amino-acid chain: Protein kish (72 aa).

The signal sequence occupies residues 1-26 (MVAIFNFQSLLVVILLFICTCTYIRG). Residues 27-47 (SYPSLLEVRDKHSFSGLPRKA) are Extracellular-facing. Residues 48 to 68 (AIIGERLSPWVSACCLIMGLW) form a helical membrane-spanning segment. Topologically, residues 69-72 (TLYN) are cytoplasmic.

The protein belongs to the KISH family.

It is found in the golgi apparatus membrane. Functionally, involved in the early part of the secretory pathway. The polypeptide is Protein kish (tmem167) (Dictyostelium discoideum (Social amoeba)).